The primary structure comprises 461 residues: MASSLPLLPKPISPFFKTPPFSTSKPLVFLNFQTRLTSRSSDVSVNLKKKNNPWLDPFDSGEDPDNEYGSLFADGKQDEDPRPPDNPDNPYGFLKFPKGYTVELASLPLKIRGDVRRCCCVISGGVYENLLFFPTIQLIKDRYPGVQVDILTTERGKQTYELNKNVRWANVYDPDDHWPEPAEYTDMIGLLKGRYYDMVLSTKLAGLGHAAFLFMTTARDRVSYIYPNVNSAGAGLMLSETFTAENTNLSELGYSMYTQMEDWLGRPFRSVPRTPLLPLRVSISRKVKEVVAAKYRNAGAVTGKFIVIHGIESDSKASMQSKGDADSLLSLEKWAKIIKGVRGFKPVFVIPHEKERENVEDFVGDDTSIVFITTPGQLAALINDSAGVIATNTAAIQLANARDKPCIGLFSSEEKGKLFVPYAEEKSNCVIIASKTGKLADIDIGTVKNAMQVFEGSLALV.

The transit peptide at 1 to 44 directs the protein to the chloroplast; sequence MASSLPLLPKPISPFFKTPPFSTSKPLVFLNFQTRLTSRSSDVS. A disordered region spans residues 66–90; it reads NEYGSLFADGKQDEDPRPPDNPDNP. Basic and acidic residues predominate over residues 75 to 85; it reads GKQDEDPRPPD.

As to quaternary structure, part of the chloroplast NDH complex, composed of a mixture of chloroplast and nucleus encoded subunits. Component of the NDH subcomplex B, at least composed of PnsB1, PnsB2, PnsB3, PnsB4 and PnsB5.

The protein localises to the plastid. The protein resides in the chloroplast thylakoid membrane. NDH shuttles electrons from NAD(P)H:plastoquinone, via FMN and iron-sulfur (Fe-S) centers, to quinones in the photosynthetic chain and possibly in a chloroplast respiratory chain. The immediate electron acceptor for the enzyme in this species is believed to be plastoquinone. Couples the redox reaction to proton translocation, and thus conserves the redox energy in a proton gradient. The protein is Photosynthetic NDH subunit of subcomplex B 1, chloroplastic of Arabidopsis thaliana (Mouse-ear cress).